A 245-amino-acid chain; its full sequence is tRNA1(Val) (adenine(37)-N6)-methyltransferase (245 aa).

It belongs to the methyltransferase superfamily. tRNA (adenine-N(6)-)-methyltransferase family.

It localises to the cytoplasm. The catalysed reaction is adenosine(37) in tRNA1(Val) + S-adenosyl-L-methionine = N(6)-methyladenosine(37) in tRNA1(Val) + S-adenosyl-L-homocysteine + H(+). Specifically methylates the adenine in position 37 of tRNA(1)(Val) (anticodon cmo5UAC). In Escherichia fergusonii (strain ATCC 35469 / DSM 13698 / CCUG 18766 / IAM 14443 / JCM 21226 / LMG 7866 / NBRC 102419 / NCTC 12128 / CDC 0568-73), this protein is tRNA1(Val) (adenine(37)-N6)-methyltransferase.